A 348-amino-acid chain; its full sequence is Protein RecA (348 aa).

Position 67–74 (67–74) interacts with ATP; it reads GPESSGKT.

Belongs to the RecA family.

It is found in the cytoplasm. Can catalyze the hydrolysis of ATP in the presence of single-stranded DNA, the ATP-dependent uptake of single-stranded DNA by duplex DNA, and the ATP-dependent hybridization of homologous single-stranded DNAs. It interacts with LexA causing its activation and leading to its autocatalytic cleavage. This is Protein RecA from Cutibacterium acnes (Propionibacterium acnes).